Consider the following 729-residue polypeptide: Probable pre-mRNA-splicing factor ATP-dependent RNA helicase DEAH3 (729 aa).

The region spanning 75 to 244 is the Helicase ATP-binding domain; that stretch reads LNTLNSNQTL…FSGAPLMKVP (170 aa). An ATP-binding site is contributed by 88–95; it reads GETGSGKT. Residues 191 to 194 carry the DEAH box motif; that stretch reads DEAH. The 181-residue stretch at 269–449 folds into the Helicase C-terminal domain; the sequence is TVVQIHMCEP…NTVLTLKKLG (181 aa).

This sequence belongs to the DEAD box helicase family. DEAH subfamily. PRP43 sub-subfamily.

The catalysed reaction is ATP + H2O = ADP + phosphate + H(+). Functionally, may be involved in pre-mRNA splicing. This chain is Probable pre-mRNA-splicing factor ATP-dependent RNA helicase DEAH3, found in Arabidopsis thaliana (Mouse-ear cress).